A 386-amino-acid chain; its full sequence is 1-deoxy-D-xylulose 5-phosphate reductoisomerase (386 aa).

Positions 13, 14, 15, 16, 40, and 122 each coordinate NADPH. Lysine 123 is a binding site for 1-deoxy-D-xylulose 5-phosphate. An NADPH-binding site is contributed by glutamate 124. Aspartate 148 provides a ligand contact to Mn(2+). 1-deoxy-D-xylulose 5-phosphate-binding residues include serine 149, glutamate 150, serine 177, and histidine 201. Glutamate 150 lines the Mn(2+) pocket. Glycine 207 is a binding site for NADPH. 4 residues coordinate 1-deoxy-D-xylulose 5-phosphate: serine 214, asparagine 219, lysine 220, and glutamate 223. Glutamate 223 provides a ligand contact to Mn(2+).

This sequence belongs to the DXR family. Requires Mg(2+) as cofactor. The cofactor is Mn(2+).

It catalyses the reaction 2-C-methyl-D-erythritol 4-phosphate + NADP(+) = 1-deoxy-D-xylulose 5-phosphate + NADPH + H(+). Its pathway is isoprenoid biosynthesis; isopentenyl diphosphate biosynthesis via DXP pathway; isopentenyl diphosphate from 1-deoxy-D-xylulose 5-phosphate: step 1/6. Functionally, catalyzes the NADPH-dependent rearrangement and reduction of 1-deoxy-D-xylulose-5-phosphate (DXP) to 2-C-methyl-D-erythritol 4-phosphate (MEP). This chain is 1-deoxy-D-xylulose 5-phosphate reductoisomerase, found in Francisella tularensis subsp. holarctica (strain OSU18).